Consider the following 544-residue polypeptide: Serine/threonine-protein kinase bur1 (544 aa).

One can recognise a Protein kinase domain in the interval 25 to 326 (FEFLGKLGEG…AIDALKHPYF (302 aa)). ATP contacts are provided by residues 31–39 (LGEGTFGEV) and K54. D155 serves as the catalytic Proton acceptor. Residues 357–544 (AAMPPAPAGG…ERVDRGPYRR (188 aa)) form a disordered region. Residues 374–403 (GGWSTNSGSRTGAETRNPRISSAARSQGNQ) are compositionally biased toward polar residues. Composition is skewed to basic and acidic residues over residues 419 to 438 (RGNE…HRDG), 456 to 466 (HSDKTGRDRGY), 488 to 511 (DRNR…DKSH), and 532 to 544 (NYRE…PYRR).

Belongs to the protein kinase superfamily. CMGC Ser/Thr protein kinase family. CDC2/CDKX subfamily.

It is found in the nucleus. The enzyme catalyses L-seryl-[protein] + ATP = O-phospho-L-seryl-[protein] + ADP + H(+). It catalyses the reaction L-threonyl-[protein] + ATP = O-phospho-L-threonyl-[protein] + ADP + H(+). The catalysed reaction is [DNA-directed RNA polymerase] + ATP = phospho-[DNA-directed RNA polymerase] + ADP + H(+). Functionally, serine/threonine-protein kinase involved in transcription regulation. Phosphorylates the UBC2/RAD6 ubiquitin-conjugating enzyme (E2), leading to monoubiquitination of histone H2B and the silencing of telomeric-associated genes. Also required for histone H3 methylation. Necessary for the recovery from pheromone-induced growth arrest in the cell cycle G1 phase. The sequence is that of Serine/threonine-protein kinase bur1 (ptkA) from Emericella nidulans (strain FGSC A4 / ATCC 38163 / CBS 112.46 / NRRL 194 / M139) (Aspergillus nidulans).